The chain runs to 398 residues: 2-epi-5-epi-valiolone synthase (398 aa).

Residues aspartate 62, 93-96 (ETVK), 126-130 (GVLMD), 150-151 (TT), lysine 163, lysine 172, and 190-193 (FLAT) contribute to the NAD(+) site. Residue lysine 163 is part of the active site. Residues glutamate 205, histidine 276, and histidine 292 each contribute to the a divalent metal cation site.

This sequence belongs to the sugar phosphate cyclases superfamily. EEVS family. The cofactor is NAD(+). Co(2+) serves as cofactor.

The enzyme catalyses D-sedoheptulose 7-phosphate = 2-epi-5-epi-valiolone + phosphate. Its function is as follows. Catalyzes the cyclization of D-sedoheptulose 7-phosphate to 2-epi-5-epi-valiolone. Does not use ido-heptulose 7-phosphate and 3-deoxy-arabino-heptulosonate 7-phosphate. Involved in the biosynthesis of the acarviose moiety of the alpha-glucosidase inhibitor acarbose. The protein is 2-epi-5-epi-valiolone synthase of Actinoplanes sp. (strain ATCC 31044 / CBS 674.73 / SE50/110).